Reading from the N-terminus, the 514-residue chain is Cardiolipin synthase 2 (514 aa).

The next 3 helical transmembrane spans lie at Leu7 to Val27, Ile41 to Phe61, and Leu71 to Phe91. 2 PLD phosphodiesterase domains span residues Ile249–Tyr276 and Glu427–Ser454. Residues His254, Lys256, Asp261, His432, Lys434, and Asp439 contribute to the active site.

This sequence belongs to the phospholipase D family. Cardiolipin synthase subfamily.

The protein localises to the cell membrane. It catalyses the reaction 2 a 1,2-diacyl-sn-glycero-3-phospho-(1'-sn-glycerol) = a cardiolipin + glycerol. Functionally, catalyzes the reversible phosphatidyl group transfer from one phosphatidylglycerol molecule to another to form cardiolipin (CL) (diphosphatidylglycerol) and glycerol. The polypeptide is Cardiolipin synthase 2 (cls2) (Bacillus cereus (strain ATCC 14579 / DSM 31 / CCUG 7414 / JCM 2152 / NBRC 15305 / NCIMB 9373 / NCTC 2599 / NRRL B-3711)).